Reading from the N-terminus, the 217-residue chain is Probable transaldolase (217 aa).

Catalysis depends on K84, which acts as the Schiff-base intermediate with substrate.

Belongs to the transaldolase family. Type 3B subfamily.

The protein localises to the cytoplasm. It carries out the reaction D-sedoheptulose 7-phosphate + D-glyceraldehyde 3-phosphate = D-erythrose 4-phosphate + beta-D-fructose 6-phosphate. Its pathway is carbohydrate degradation; pentose phosphate pathway; D-glyceraldehyde 3-phosphate and beta-D-fructose 6-phosphate from D-ribose 5-phosphate and D-xylulose 5-phosphate (non-oxidative stage): step 2/3. Functionally, transaldolase is important for the balance of metabolites in the pentose-phosphate pathway. This chain is Probable transaldolase, found in Roseiflexus castenholzii (strain DSM 13941 / HLO8).